A 911-amino-acid chain; its full sequence is Protein translocase subunit SecA (911 aa).

Residues Q87, 105–109 (GEGKT), and D510 each bind ATP. C896, C898, C907, and H908 together coordinate Zn(2+).

The protein belongs to the SecA family. Monomer and homodimer. Part of the essential Sec protein translocation apparatus which comprises SecA, SecYEG and auxiliary proteins SecDF-YajC and YidC. The cofactor is Zn(2+).

It is found in the cell inner membrane. It localises to the cytoplasm. It carries out the reaction ATP + H2O + cellular proteinSide 1 = ADP + phosphate + cellular proteinSide 2.. In terms of biological role, part of the Sec protein translocase complex. Interacts with the SecYEG preprotein conducting channel. Has a central role in coupling the hydrolysis of ATP to the transfer of proteins into and across the cell membrane, serving both as a receptor for the preprotein-SecB complex and as an ATP-driven molecular motor driving the stepwise translocation of polypeptide chains across the membrane. The polypeptide is Protein translocase subunit SecA (Acinetobacter baumannii (strain SDF)).